Reading from the N-terminus, the 480-residue chain is RAC-alpha serine/threonine-protein kinase (480 aa).

In terms of domain architecture, PH spans 5 to 108 (AIVKEGWLHK…WTTAIQTVAD (104 aa)). N6-acetyllysine is present on residues K14 and K20. 14 to 19 (KRGEYI) contributes to the 1D-myo-inositol 1,3,4,5-tetrakisphosphate binding site. 1D-myo-inositol 1,3,4,5-tetrakisphosphate is bound by residues 23 to 25 (RPR) and N53. A disulfide bond links C60 and C77. Position 86 (R86) interacts with 1D-myo-inositol 1,3,4,5-tetrakisphosphate. The residue at position 124 (S124) is a Phosphoserine. S129 carries the post-translational modification Phosphoserine; alternate. S129 is a glycosylation site (O-linked (GlcNAc) serine; alternate). The Protein kinase domain occupies 150-408 (FEYLKLLGKG…AKEIMQHRFF (259 aa)). 156 to 164 (LGKGTFGKV) lines the ATP pocket. Y176 is subject to Phosphotyrosine; by TNK2. K179 contributes to the ATP binding site. Residue D274 is the Proton acceptor of the active site. Residue K284 forms a Glycyl lysine isopeptide (Lys-Gly) (interchain with G-Cter in ubiquitin) linkage. C296 and C310 are joined by a disulfide. A glycan (O-linked (GlcNAc) threonine) is linked at T305. T308 carries the phosphothreonine; by PDPK1 modification. Residue T312 is glycosylated (O-linked (GlcNAc) threonine). An AGC-kinase C-terminal domain is found at 409 to 480 (ASIVWQDVYE…QFSYSASATA (72 aa)). At T448 the chain carries Phosphothreonine. At T450 the chain carries Phosphothreonine; by MTOR. Positions 450 to 480 (TPPDQDDSMEGVDSERRPHFPQFSYSASATA) are disordered. S473 is a glycosylation site (O-linked (GlcNAc) serine; alternate). S473 bears the Phosphoserine; by MTOR; alternate mark. A Phosphotyrosine modification is found at Y474. S477 carries the post-translational modification Phosphoserine. The residue at position 479 (T479) is a Phosphothreonine.

It belongs to the protein kinase superfamily. AGC Ser/Thr protein kinase family. RAC subfamily. In terms of assembly, interacts (via the C-terminus) with CCDC88A (via its C-terminus) and THEM4 (via its C-terminus). Interacts with AKTIP. Interacts (via PH domain) with MTCP1, TCL1A and TCL1B. Interacts with TRAF6. Interacts with GRB10; the interaction leads to GRB10 phosphorylation thus promoting YWHAE binding. Interacts with RARA; the interaction phosphorylates RARA and represses its transactivation activity. Interacts with MAP3K5 and TNK2. Interacts with BAD, CLK2, PPP2R5B, STK3 and STK4. Interacts (via PH domain) with SIRT1. Interacts with SRPK2 in a phosphorylation-dependent manner. Interacts with RAF1. Interacts with PKN2 (via C-terminal domain); the interaction occurs with the C-terminus cleavage products of PKN2 in apoptotic cells. Interacts with TRIM13; the interaction ubiquitinates AKT1 leading to its proteasomal degradation. Interacts with and phosphorylated by PDPK1. Interacts with BTBD10. Interacts with KCTD20. Interacts with PA2G4. Interacts with PA2G4. Interacts with KIF14; the interaction is detected in the plasma membrane upon INS stimulation and promotes AKT1 phosphorylation. Interacts with FAM83B; activates the PI3K/AKT signaling cascade. Interacts with WDFY2 (via WD repeats 1-3). Forms a complex with WDFY2 and FOXO1. Interacts with FAM168A. Interacts with SYAP1 (via phosphorylated form and BSD domain); this interaction is enhanced in a mTORC2-mediated manner in response to epidermal growth factor (EGF) stimulation and activates AKT1. Interacts with PKHM3. Interacts with FKBP5/FKBP51; promoting interaction between Akt/AKT1 and PHLPP1, thereby enhancing dephosphorylation and subsequent activation of Akt/AKT1. Interacts with TMEM175; leading to formation of the lysoK(GF) complex. O-GlcNAcylation at Thr-305 and Thr-312 inhibits activating phosphorylation at Thr-308 via disrupting the interaction between AKT1 and PDPK1. O-GlcNAcylation at Ser-473 also probably interferes with phosphorylation at this site. Post-translationally, phosphorylation on Thr-308, Ser-473 and Tyr-474 is required for full activity. Phosphorylation of the activation loop at Thr-308 by PDPK1/PDK1 is a prerequisite for full activation. Phosphorylation by mTORC2 in response to growth factors plays a key role in AKT1 activation: mTORC2 phosphorylates different sites depending on the context, such as Thr-450, Ser-473, Ser-477 or Thr-479, thereby facilitating subsequent phosphorylation of the activation loop by PDPK1/PDK1. Phosphorylation at Ser-473 by mTORC2 promotes ubiquitination and degradation by the proteasome. Also phosphorylated at Ser-477 and Thr-479 by CDK2, facilitating subsequent phosphorylation of the activation loop by PDPK1/PDK1. Activated TNK2 phosphorylates it on Tyr-176 resulting in its binding to the anionic plasma membrane phospholipid PA. This phosphorylated form localizes to the cell membrane, where it is targeted by PDPK1 and PDPK2 for further phosphorylations on Thr-308 and Ser-473 leading to its activation. Phosphorylated at Thr-308 and Ser-473 by IKBKE and TBK1. Ser-473 phosphorylation is enhanced by interaction with AGAP2 isoform 2 (PIKE-A). Ser-473 phosphorylation is enhanced by signaling through activated FLT3. Ser-473 is dephosphorylated by PHLPP. Dephosphorylated at Thr-308 and Ser-473 by PP2A phosphatase. The phosphorylated form of PPP2R5B is required for bridging AKT1 with PP2A phosphatase. Ser-473 is dephosphorylated by CPPED1, leading to termination of signaling. AIM2 acts as an inhibitor of AKT1 by inhibiting phosphorylation Ser-473: AIM2 acts both by inhibiting the activity of PRKDC/DNA-PK kinase and promoting dephosphorylation by PP2A phosphatase. In terms of processing, ubiquitinated; undergoes both 'Lys-48'- and 'Lys-63'-linked polyubiquitination. TRAF6-induced 'Lys-63'-linked AKT1 ubiquitination is critical for phosphorylation and activation. When ubiquitinated, it translocates to the plasma membrane, where it becomes phosphorylated. When fully phosphorylated and translocated into the nucleus, undergoes 'Lys-48'-polyubiquitination catalyzed by TTC3, leading to its degradation by the proteasome. Ubiquitinated via 'Lys-48'-linked polyubiquitination by ZNRF1, leading to its degradation by the proteasome. Also ubiquitinated by TRIM13 leading to its proteasomal degradation. Phosphorylated, undergoes 'Lys-48'-linked polyubiquitination preferentially at Lys-284 catalyzed by MUL1, leading to its proteasomal degradation. Acetylated on Lys-14 and Lys-20 by the histone acetyltransferases EP300 and KAT2B. Acetylation results in reduced phosphorylation and inhibition of activity. Deacetylated at Lys-14 and Lys-20 by SIRT1. SIRT1-mediated deacetylation relieves the inhibition. Post-translationally, cleavage by caspase-3/CASP3. Cleaved at the caspase-3 consensus site Asp-462 during apoptosis, resulting in down-regulation of the AKT signaling pathway and decreased cell survival.

It is found in the cytoplasm. It localises to the nucleus. The protein localises to the cell membrane. Its subcellular location is the mitochondrion intermembrane space. The catalysed reaction is L-seryl-[protein] + ATP = O-phospho-L-seryl-[protein] + ADP + H(+). It catalyses the reaction L-threonyl-[protein] + ATP = O-phospho-L-threonyl-[protein] + ADP + H(+). Functionally, AKT1 is one of 3 closely related serine/threonine-protein kinases (AKT1, AKT2 and AKT3) called the AKT kinase, and which regulate many processes including metabolism, proliferation, cell survival, growth and angiogenesis. This is mediated through serine and/or threonine phosphorylation of a range of downstream substrates. Over 100 substrate candidates have been reported so far, but for most of them, no isoform specificity has been reported. AKT is responsible of the regulation of glucose uptake by mediating insulin-induced translocation of the SLC2A4/GLUT4 glucose transporter to the cell surface. Phosphorylation of PTPN1 at 'Ser-50' negatively modulates its phosphatase activity preventing dephosphorylation of the insulin receptor and the attenuation of insulin signaling. Phosphorylation of TBC1D4 triggers the binding of this effector to inhibitory 14-3-3 proteins, which is required for insulin-stimulated glucose transport. AKT also regulates the storage of glucose in the form of glycogen by phosphorylating GSK3A at 'Ser-21' and GSK3B at 'Ser-9', resulting in inhibition of its kinase activity. Phosphorylation of GSK3 isoforms by AKT is also thought to be one mechanism by which cell proliferation is driven. AKT also regulates cell survival via the phosphorylation of MAP3K5 (apoptosis signal-related kinase). Phosphorylation of 'Ser-83' decreases MAP3K5 kinase activity stimulated by oxidative stress and thereby prevents apoptosis. AKT mediates insulin-stimulated protein synthesis by phosphorylating TSC2 at 'Ser-939' and 'Thr-1462', thereby activating the mTORC1 signaling pathway, and leading to both phosphorylation of 4E-BP1 and in activation of RPS6KB1. Also regulates the mTORC1 signaling pathway by catalyzing phosphorylation of CASTOR1 and DEPDC5. AKT plays a role as key modulator of the AKT-mTOR signaling pathway controlling the tempo of the process of newborn neurons integration during adult neurogenesis, including correct neuron positioning, dendritic development and synapse formation. Part of a positive feedback loop of mTORC2 signaling by mediating phosphorylation of MAPKAP1/SIN1, promoting mTORC2 activation. AKT is involved in the phosphorylation of members of the FOXO factors (Forkhead family of transcription factors), leading to binding of 14-3-3 proteins and cytoplasmic localization. In particular, FOXO1 is phosphorylated at 'Thr-24', 'Ser-256' and 'Ser-319'. FOXO3 and FOXO4 are phosphorylated on equivalent sites. AKT has an important role in the regulation of NF-kappa-B-dependent gene transcription and positively regulates the activity of CREB1 (cyclic AMP (cAMP)-response element binding protein). The phosphorylation of CREB1 induces the binding of accessory proteins that are necessary for the transcription of pro-survival genes such as BCL2 and MCL1. AKT phosphorylates 'Ser-454' on ATP citrate lyase (ACLY), thereby potentially regulating ACLY activity and fatty acid synthesis. Activates the 3B isoform of cyclic nucleotide phosphodiesterase (PDE3B) via phosphorylation of 'Ser-273', resulting in reduced cyclic AMP levels and inhibition of lipolysis. Phosphorylates PIKFYVE on 'Ser-318', which results in increased PI(3)P-5 activity. The Rho GTPase-activating protein DLC1 is another substrate and its phosphorylation is implicated in the regulation cell proliferation and cell growth. Signals downstream of phosphatidylinositol 3-kinase (PI(3)K) to mediate the effects of various growth factors such as platelet-derived growth factor (PDGF), epidermal growth factor (EGF), insulin and insulin-like growth factor 1 (IGF1). AKT mediates the antiapoptotic effects of IGF1. Essential for the SPATA13-mediated regulation of cell migration and adhesion assembly and disassembly. May be involved in the regulation of the placental development. Phosphorylates STK4/MST1 at 'Thr-120' and 'Thr-387' leading to inhibition of its: kinase activity, nuclear translocation, autophosphorylation and ability to phosphorylate FOXO3. Phosphorylates STK3/MST2 at 'Thr-117' and 'Thr-384' leading to inhibition of its: cleavage, kinase activity, autophosphorylation at Thr-180, binding to RASSF1 and nuclear translocation. Phosphorylates SRPK2 and enhances its kinase activity towards SRSF2 and ACIN1 and promotes its nuclear translocation. Phosphorylates RAF1 at 'Ser-259' and negatively regulates its activity. Phosphorylation of BAD stimulates its pro-apoptotic activity. Phosphorylates KAT6A at 'Thr-369' and this phosphorylation inhibits the interaction of KAT6A with PML and negatively regulates its acetylation activity towards p53/TP53. Phosphorylates palladin (PALLD), modulating cytoskeletal organization and cell motility. Phosphorylates prohibitin (PHB), playing an important role in cell metabolism and proliferation. Phosphorylates CDKN1A, for which phosphorylation at 'Thr-145' induces its release from CDK2 and cytoplasmic relocalization. These recent findings indicate that the AKT1 isoform has a more specific role in cell motility and proliferation. Phosphorylates CLK2 thereby controlling cell survival to ionizing radiation. Phosphorylates PCK1 at 'Ser-90', reducing the binding affinity of PCK1 to oxaloacetate and changing PCK1 into an atypical protein kinase activity using GTP as donor. Also acts as an activator of TMEM175 potassium channel activity in response to growth factors: forms the lysoK(GF) complex together with TMEM175 and acts by promoting TMEM175 channel activation, independently of its protein kinase activity. Acts as a negative regulator of the cGAS-STING pathway by mediating phosphorylation of CGAS during mitosis, leading to its inhibition. Acts as a regulator of mitochondrial calcium uptake by mediating phosphorylation of MICU1 in the mitochondrial intermembrane space, impairing MICU1 maturation. Acts as an inhibitor of tRNA methylation by mediating phosphorylation of the N-terminus of METTL1, thereby inhibiting METTL1 methyltransferase activity. In response to LPAR1 receptor pathway activation, phosphorylates Rabin8/RAB3IP which alters its activity and phosphorylates WDR44 which induces WDR44 binding to Rab11, thereby switching Rab11 vesicular function from preciliary trafficking to endocytic recycling. This Bos taurus (Bovine) protein is RAC-alpha serine/threonine-protein kinase (AKT1).